A 394-amino-acid polypeptide reads, in one-letter code: Elongation factor Tu 1 (394 aa).

The 195-residue stretch at 10 to 204 (KPHVNVGTIG…ALDNYIPEPE (195 aa)) folds into the tr-type G domain. Residues 19 to 26 (GHVDHGKT) form a G1 region. A GTP-binding site is contributed by 19–26 (GHVDHGKT). Residue T26 coordinates Mg(2+). The G2 stretch occupies residues 60–64 (GITIS). Residues 81 to 84 (DCPG) are G3. GTP is bound by residues 81 to 85 (DCPGH) and 136 to 139 (NKCD). The tract at residues 136 to 139 (NKCD) is G4. Positions 174–176 (SAL) are G5.

Belongs to the TRAFAC class translation factor GTPase superfamily. Classic translation factor GTPase family. EF-Tu/EF-1A subfamily. In terms of assembly, monomer.

Its subcellular location is the cytoplasm. It catalyses the reaction GTP + H2O = GDP + phosphate + H(+). Its function is as follows. GTP hydrolase that promotes the GTP-dependent binding of aminoacyl-tRNA to the A-site of ribosomes during protein biosynthesis. This chain is Elongation factor Tu 1, found in Photobacterium profundum (strain SS9).